Consider the following 542-residue polypeptide: Chaperonin GroEL 3 (542 aa).

Residues 30 to 33 (TLGP), Lys-51, 87 to 91 (DGTTT), Gly-415, and Asp-494 each bind ATP. Residues 523–542 (KPKKKEPPMPAMPSDMGDYD) form a disordered region.

This sequence belongs to the chaperonin (HSP60) family. Forms a cylinder of 14 subunits composed of two heptameric rings stacked back-to-back. Interacts with the co-chaperonin GroES.

It localises to the cytoplasm. The catalysed reaction is ATP + H2O + a folded polypeptide = ADP + phosphate + an unfolded polypeptide.. Its function is as follows. Together with its co-chaperonin GroES, plays an essential role in assisting protein folding. The GroEL-GroES system forms a nano-cage that allows encapsulation of the non-native substrate proteins and provides a physical environment optimized to promote and accelerate protein folding. The protein is Chaperonin GroEL 3 of Syntrophus aciditrophicus (strain SB).